The primary structure comprises 461 residues: Hydroxyproline dehydrogenase (461 aa).

N6-acetyllysine is present on K310.

It belongs to the proline oxidase family. Requires FAD as cofactor.

The enzyme catalyses trans-4-hydroxy-L-proline + a quinone = (3R,5S)-1-pyrroline-3-hydroxy-5-carboxylate + a quinol + H(+). It carries out the reaction L-proline + a quinone = (S)-1-pyrroline-5-carboxylate + a quinol + H(+). It participates in amino-acid degradation; L-proline degradation into L-glutamate; L-glutamate from L-proline: step 1/2. Its function is as follows. Dehydrogenase that converts trans-4-L-hydroxyproline to delta-1-pyrroline-3-hydroxy-5-carboxylate (Hyp) using ubiquinone-10 as the terminal electron acceptor. Can also use proline as a substrate but with a very much lower efficiency. Does not react with other diastereomers of Hyp: trans-4-D-hydroxyproline and cis-4-L-hydroxyproline. Ubiquininone analogs such as menadione, duroquinone and ubiquinone-1 react more efficiently than oxygen as the terminal electron acceptor during catalysis. This chain is Hydroxyproline dehydrogenase, found in Bos taurus (Bovine).